The sequence spans 73 residues: Conotoxin Bt11.1 (73 aa).

The first 20 residues, 1-20 (MKLCVAFLLVLVILPSVIGG), serve as a signal peptide directing secretion. A propeptide spanning residues 21-35 (KPSERTLSGATRRGD) is cleaved from the precursor. Intrachain disulfides connect cysteine 39/cysteine 53, cysteine 46/cysteine 58, cysteine 52/cysteine 63, and cysteine 57/cysteine 70.

This sequence belongs to the conotoxin I1 superfamily. Expressed by the venom duct.

The protein resides in the secreted. This is Conotoxin Bt11.1 from Conus betulinus (Beech cone).